We begin with the raw amino-acid sequence, 204 residues long: Peptide deformylase (204 aa).

Positions 131 and 174 each coordinate Fe cation. Residue Glu175 is part of the active site. His178 lines the Fe cation pocket.

The protein belongs to the polypeptide deformylase family. Fe(2+) serves as cofactor.

It carries out the reaction N-terminal N-formyl-L-methionyl-[peptide] + H2O = N-terminal L-methionyl-[peptide] + formate. In terms of biological role, removes the formyl group from the N-terminal Met of newly synthesized proteins. Requires at least a dipeptide for an efficient rate of reaction. N-terminal L-methionine is a prerequisite for activity but the enzyme has broad specificity at other positions. The polypeptide is Peptide deformylase (Streptococcus pyogenes serotype M18 (strain MGAS8232)).